We begin with the raw amino-acid sequence, 217 residues long: Peptide methionine sulfoxide reductase MsrA 1 (217 aa).

Cys54 is a catalytic residue.

It belongs to the MsrA Met sulfoxide reductase family.

The enzyme catalyses L-methionyl-[protein] + [thioredoxin]-disulfide + H2O = L-methionyl-(S)-S-oxide-[protein] + [thioredoxin]-dithiol. It catalyses the reaction [thioredoxin]-disulfide + L-methionine + H2O = L-methionine (S)-S-oxide + [thioredoxin]-dithiol. Its function is as follows. Has an important function as a repair enzyme for proteins that have been inactivated by oxidation. Catalyzes the reversible oxidation-reduction of methionine sulfoxide in proteins to methionine. The polypeptide is Peptide methionine sulfoxide reductase MsrA 1 (msrA1) (Caulobacter vibrioides (strain ATCC 19089 / CIP 103742 / CB 15) (Caulobacter crescentus)).